The following is a 62-amino-acid chain: Histone H1.2, embryonic (62 aa).

In terms of domain architecture, H15 spans 1–53; sequence HVVAAITALKERGGSSMKKQSVFIKKALKSGVEKGTLVQVKGKGASGSFKLGK.

It belongs to the histone H1/H5 family.

The protein resides in the nucleus. Its subcellular location is the chromosome. Its function is as follows. Histones H1 are necessary for the condensation of nucleosome chains into higher-order structures. This is Histone H1.2, embryonic from Parechinus angulosus (Angulate sea urchin).